The sequence spans 410 residues: LL-diaminopimelate aminotransferase (410 aa).

The substrate site is built by tyrosine 15 and glycine 42. Pyridoxal 5'-phosphate-binding positions include tyrosine 72, threonine 108–lysine 109, tyrosine 132, asparagine 186, tyrosine 217, and serine 245–serine 247. The substrate site is built by lysine 109, tyrosine 132, and asparagine 186. Lysine 248 is subject to N6-(pyridoxal phosphate)lysine. 2 residues coordinate pyridoxal 5'-phosphate: arginine 256 and asparagine 291. 2 residues coordinate substrate: asparagine 291 and arginine 387.

The protein belongs to the class-I pyridoxal-phosphate-dependent aminotransferase family. LL-diaminopimelate aminotransferase subfamily. In terms of assembly, homodimer. Requires pyridoxal 5'-phosphate as cofactor.

The catalysed reaction is (2S,6S)-2,6-diaminopimelate + 2-oxoglutarate = (S)-2,3,4,5-tetrahydrodipicolinate + L-glutamate + H2O + H(+). It participates in amino-acid biosynthesis; L-lysine biosynthesis via DAP pathway; LL-2,6-diaminopimelate from (S)-tetrahydrodipicolinate (aminotransferase route): step 1/1. In terms of biological role, involved in the synthesis of meso-diaminopimelate (m-DAP or DL-DAP), required for both lysine and peptidoglycan biosynthesis. Catalyzes the direct conversion of tetrahydrodipicolinate to LL-diaminopimelate. This is LL-diaminopimelate aminotransferase from Lawsonia intracellularis (strain PHE/MN1-00).